The following is a 1057-amino-acid chain: Carbamoyl phosphate synthase large chain (1057 aa).

Residues 1-401 (MPKRDDIKTI…SLLKAIRSLE (401 aa)) are carboxyphosphate synthetic domain. The ATP site is built by Arg-129, Arg-169, Gly-175, Gly-176, Lys-208, Ile-210, Glu-215, Gly-241, Ile-242, His-243, Gln-284, and Glu-298. An ATP-grasp 1 domain is found at 133–327 (RTLMNDLNVP…IAKLAAKIAV (195 aa)). 3 residues coordinate Mg(2+): Gln-284, Glu-298, and Asn-300. Mn(2+) contacts are provided by Gln-284, Glu-298, and Asn-300. Residues 402 to 546 (YGVHHLGLSN…YGTYEYENES (145 aa)) are oligomerization domain. Residues 547-929 (IVTDKEKILV…ALYKGLTGSG (383 aa)) are carbamoyl phosphate synthetic domain. The ATP-grasp 2 domain maps to 671–861 (EALLREIAVP…MAQLAMRAIM (191 aa)). ATP contacts are provided by Arg-707, Arg-746, Leu-748, Glu-752, Gly-777, Val-778, His-779, Ser-780, Gln-820, and Glu-832. 3 residues coordinate Mg(2+): Gln-820, Glu-832, and Asn-834. 3 residues coordinate Mn(2+): Gln-820, Glu-832, and Asn-834. The MGS-like domain occupies 930–1057 (FEVKDHGTVL…ESMTFTMRNV (128 aa)). Residues 930–1057 (FEVKDHGTVL…ESMTFTMRNV (128 aa)) are allosteric domain.

The protein belongs to the CarB family. In terms of assembly, composed of two chains; the small (or glutamine) chain promotes the hydrolysis of glutamine to ammonia, which is used by the large (or ammonia) chain to synthesize carbamoyl phosphate. Tetramer of heterodimers (alpha,beta)4. Mg(2+) serves as cofactor. Mn(2+) is required as a cofactor.

It catalyses the reaction hydrogencarbonate + L-glutamine + 2 ATP + H2O = carbamoyl phosphate + L-glutamate + 2 ADP + phosphate + 2 H(+). The enzyme catalyses hydrogencarbonate + NH4(+) + 2 ATP = carbamoyl phosphate + 2 ADP + phosphate + 2 H(+). Its pathway is amino-acid biosynthesis; L-arginine biosynthesis; carbamoyl phosphate from bicarbonate: step 1/1. It participates in pyrimidine metabolism; UMP biosynthesis via de novo pathway; (S)-dihydroorotate from bicarbonate: step 1/3. In terms of biological role, large subunit of the glutamine-dependent carbamoyl phosphate synthetase (CPSase). CPSase catalyzes the formation of carbamoyl phosphate from the ammonia moiety of glutamine, carbonate, and phosphate donated by ATP, constituting the first step of 2 biosynthetic pathways, one leading to arginine and/or urea and the other to pyrimidine nucleotides. The large subunit (synthetase) binds the substrates ammonia (free or transferred from glutamine from the small subunit), hydrogencarbonate and ATP and carries out an ATP-coupled ligase reaction, activating hydrogencarbonate by forming carboxy phosphate which reacts with ammonia to form carbamoyl phosphate. The sequence is that of Carbamoyl phosphate synthase large chain from Staphylococcus epidermidis (strain ATCC 12228 / FDA PCI 1200).